A 102-amino-acid chain; its full sequence is Small ribosomal subunit protein uS10 (102 aa).

This sequence belongs to the universal ribosomal protein uS10 family. Part of the 30S ribosomal subunit.

Involved in the binding of tRNA to the ribosomes. The polypeptide is Small ribosomal subunit protein uS10 (Bacillus cereus (strain G9842)).